The primary structure comprises 473 residues: Bestrophin-4 (473 aa).

Residues 1–31 are Cytoplasmic-facing; the sequence is MTVSYTLKVAEARFGGFSGLLLRWRGSIYKL. Ca(2+) is bound at residue alanine 10. The chain crosses the membrane as a helical span at residues 32 to 51; the sequence is LYKEFLLFGALYAVLSITYR. The Extracellular segment spans residues 52-60; sequence LLLTQEQRY. Residues 61–82 form a helical membrane-spanning segment; the sequence is VYAQVARYCNRSADLIPLSFVL. The Cytoplasmic portion of the chain corresponds to 83 to 237; that stretch reads GFYVTLVVNR…DWISIPLVYT (155 aa). A helical transmembrane segment spans residues 238 to 255; the sequence is QVVTIAVYSFFALSLVGR. Over 256 to 289 the chain is Extracellular; that stretch reads QFVEPEAGAAKPQKLLKPGQEPAPALGDPDMYVP. The chain crosses the membrane as a helical span at residues 290–303; sequence LTTLLQFFFYAGWL. Topologically, residues 304-473 are cytoplasmic; the sequence is KVAEQIINPF…AESGDEALEP (170 aa). 4 residues coordinate Ca(2+): glutamine 308, asparagine 311, aspartate 316, and aspartate 319. Disordered stretches follow at residues 379–408 and 428–473; these read TFNLRMSDDPEQSLQVEASPGSGRPAPAAQ and RNFG…ALEP. Low complexity predominate over residues 396–407; that stretch reads ASPGSGRPAPAA. Positions 445-461 are enriched in basic and acidic residues; sequence FRAEEGGDPEAAARIEE. A compositionally biased stretch (acidic residues) spans 462 to 473; sequence ESAESGDEALEP.

This sequence belongs to the anion channel-forming bestrophin (TC 1.A.46) family. Calcium-sensitive chloride channel subfamily. Predominantly found in colon and the weakly in fetal brain, spinal cord, retina, lung, trachea, testis and placenta.

It localises to the cell membrane. The catalysed reaction is chloride(in) = chloride(out). It carries out the reaction hydrogencarbonate(in) = hydrogencarbonate(out). Functionally, ligand-gated anion channel that allows the movement of anions across cell membranes when activated by Calcium (Ca2+). Mediates the movement of hydrogencarbonate and chloride. The sequence is that of Bestrophin-4 from Homo sapiens (Human).